A 279-amino-acid chain; its full sequence is uncharacterized protein (279 aa).

To M.tuberculosis Rv2569c.

This is an uncharacterized protein from Mycobacterium leprae (strain TN).